Consider the following 400-residue polypeptide: ATP-dependent RNA helicase fal-1 (400 aa).

The Q motif motif lies at 26 to 54; the sequence is PTFESMSLKESLLRGIYAYGYESPSAVQS. In terms of domain architecture, Helicase ATP-binding spans 57–227; it reads IVQICKGRDT…TKFMTDPVRI (171 aa). 70–77 contributes to the ATP binding site; sequence AQSGTGKT. The DEAD box motif lies at 175 to 178; sequence DEAD. A Helicase C-terminal domain is found at 238–399; it reads GLKQYFIAVE…EMPMNVADLI (162 aa).

Belongs to the DEAD box helicase family. DDX48/FAL1 subfamily.

It is found in the nucleus. The protein resides in the nucleolus. It catalyses the reaction ATP + H2O = ADP + phosphate + H(+). ATP-dependent RNA helicase involved in 40S ribosomal subunit biogenesis. Required for the processing and cleavage of 35S pre-rRNA at sites A0, A1, and A2, leading to mature 18S rRNA. This Neurospora crassa (strain ATCC 24698 / 74-OR23-1A / CBS 708.71 / DSM 1257 / FGSC 987) protein is ATP-dependent RNA helicase fal-1 (fal-1).